The primary structure comprises 466 residues: Alpha-1A adrenergic receptor (466 aa).

At 1-27 (MVLLSENASEGSNCTHPPAPVNISKAI) the chain is on the extracellular side. Residues N7, N13, and N22 are each glycosylated (N-linked (GlcNAc...) asparagine). The helical transmembrane segment at 28-51 (LLGVILGGLIIFGVLGNILVILSV) threads the bilayer. The Cytoplasmic portion of the chain corresponds to 52–64 (ACHRHLHSVTHYY). Residues 65 to 88 (IVNLAVADLLLTSTVLPFSAIFEI) form a helical membrane-spanning segment. The Extracellular segment spans residues 89-99 (LGYWAFGRVFC). A disulfide bridge connects residues C99 and C176. The helical transmembrane segment at 100-122 (NIWAAVDVLCCTASIMGLCIISI) threads the bilayer. Residues 123 to 143 (DRYIGVSYPLRYPTIVTQRRG) lie on the Cytoplasmic side of the membrane. A helical membrane pass occupies residues 144-167 (VRALLCVWVLSLVISIGPLFGWRQ). The Extracellular portion of the chain corresponds to 168–181 (PAPEDETICQINEE). Residues 182–205 (PGYVLFSALGSFYVPLAIILVMYC) form a helical membrane-spanning segment. The Cytoplasmic segment spans residues 206–273 (RVYVVAKRES…FSREKKAAKT (68 aa)). S215 is modified (phosphoserine; by PKA). A helical membrane pass occupies residues 274–297 (LGIVVGCFVLCWLPFFLVMPIGSF). Residues 298–305 (FPDFKPSE) are Extracellular-facing. The helical transmembrane segment at 306–329 (TVFKIVFWLGYLNSCINPIIYPCS) threads the bilayer. The Cytoplasmic segment spans residues 330–466 (SQEFKKAFQN…ISLGENGEEV (137 aa)). A Nuclear localization signal motif is present at residues 334 to 349 (KKAFQNVLRIQCLRRR). The S-palmitoyl cysteine moiety is linked to residue C345.

The protein belongs to the G-protein coupled receptor 1 family. Adrenergic receptor subfamily. ADRA1A sub-subfamily. In terms of assembly, homo- and heterooligomer. Heterooligomerizes with ADRA1B homooligomers in cardiac myocytes. Interacts with CAVIN4. In terms of processing, C-terminal Ser or Thr residues may be phosphorylated. Abundant in heart, brain, aorta, vena cava, vas deferens, submaxillary gland, lung, and kidney. Found at lower levels in prostate, parotid gland and skeletal muscle.

It is found in the nucleus membrane. It localises to the cell membrane. The protein resides in the cytoplasm. The protein localises to the membrane. Its subcellular location is the caveola. This alpha-adrenergic receptor mediates its action by association with G proteins that activate a phosphatidylinositol-calcium second messenger system. Its effect is mediated by G(q) and G(11) proteins. Nuclear ADRA1A-ADRA1B heterooligomers regulate phenylephrine (PE)-stimulated ERK signaling in cardiac myocytes. This Rattus norvegicus (Rat) protein is Alpha-1A adrenergic receptor (Adra1a).